The following is a 428-amino-acid chain: Dihydroorotase (428 aa).

Positions 59 and 61 each coordinate Zn(2+). Substrate contacts are provided by residues 61–63 (HFR) and Asn93. 3 residues coordinate Zn(2+): Asp151, His178, and His231. Asn277 lines the substrate pocket. Residue Asp304 participates in Zn(2+) binding. Asp304 is an active-site residue. Substrate is bound by residues His308 and 322–323 (FG).

It belongs to the metallo-dependent hydrolases superfamily. DHOase family. Class I DHOase subfamily. In terms of assembly, homodimer. Zn(2+) is required as a cofactor.

It catalyses the reaction (S)-dihydroorotate + H2O = N-carbamoyl-L-aspartate + H(+). It participates in pyrimidine metabolism; UMP biosynthesis via de novo pathway; (S)-dihydroorotate from bicarbonate: step 3/3. Its function is as follows. Catalyzes the reversible cyclization of carbamoyl aspartate to dihydroorotate. The polypeptide is Dihydroorotase (Bacillus subtilis (strain 168)).